Consider the following 539-residue polypeptide: Eukaryotic translation initiation factor 3 subunit L (539 aa).

Residues 306 to 514 (TFSDILLYIQ…IHIADTKVSH (209 aa)) form the PCI domain.

Belongs to the eIF-3 subunit L family. Component of the eukaryotic translation initiation factor 3 (eIF-3) complex. The eIF-3 complex interacts with pix.

The protein resides in the cytoplasm. Component of the eukaryotic translation initiation factor 3 (eIF-3) complex, which is involved in protein synthesis of a specialized repertoire of mRNAs and, together with other initiation factors, stimulates binding of mRNA and methionyl-tRNAi to the 40S ribosome. The eIF-3 complex specifically targets and initiates translation of a subset of mRNAs involved in cell proliferation. The protein is Eukaryotic translation initiation factor 3 subunit L of Drosophila yakuba (Fruit fly).